Here is a 296-residue protein sequence, read N- to C-terminus: GTPase Era (296 aa).

The region spanning 7–174 is the Era-type G domain; that stretch reads KCSMSAIVGA…VDYLCETSPY (168 aa). The interval 15–22 is G1; it reads GATNAGKS. 15 to 22 contributes to the GTP binding site; the sequence is GATNAGKS. The interval 41-45 is G2; sequence QTTRV. Positions 62–65 are G3; the sequence is DTPG. Residues 62–66 and 124–127 each bind GTP; these read DTPGI and NKID. The tract at residues 124-127 is G4; it reads NKID. The G5 stretch occupies residues 153–155; it reads ISA. One can recognise a KH type-2 domain in the interval 205–282; sequence LRHELPYSLS…HLFLFVKVRE (78 aa).

It belongs to the TRAFAC class TrmE-Era-EngA-EngB-Septin-like GTPase superfamily. Era GTPase family. Monomer.

Its subcellular location is the cytoplasm. The protein localises to the cell inner membrane. Functionally, an essential GTPase that binds both GDP and GTP, with rapid nucleotide exchange. Plays a role in 16S rRNA processing and 30S ribosomal subunit biogenesis and possibly also in cell cycle regulation and energy metabolism. The sequence is that of GTPase Era from Ehrlichia ruminantium (strain Welgevonden).